A 416-amino-acid polypeptide reads, in one-letter code: Serine hydroxymethyltransferase (416 aa).

(6S)-5,6,7,8-tetrahydrofolate-binding positions include Leu121 and 125-127 (GHL). Lys229 bears the N6-(pyridoxal phosphate)lysine mark. Residues Glu245 and 354–356 (SPF) each bind (6S)-5,6,7,8-tetrahydrofolate.

It belongs to the SHMT family. In terms of assembly, homodimer. Pyridoxal 5'-phosphate is required as a cofactor.

The protein localises to the cytoplasm. It catalyses the reaction (6R)-5,10-methylene-5,6,7,8-tetrahydrofolate + glycine + H2O = (6S)-5,6,7,8-tetrahydrofolate + L-serine. It functions in the pathway one-carbon metabolism; tetrahydrofolate interconversion. It participates in amino-acid biosynthesis; glycine biosynthesis; glycine from L-serine: step 1/1. In terms of biological role, catalyzes the reversible interconversion of serine and glycine with tetrahydrofolate (THF) serving as the one-carbon carrier. This reaction serves as the major source of one-carbon groups required for the biosynthesis of purines, thymidylate, methionine, and other important biomolecules. Also exhibits THF-independent aldolase activity toward beta-hydroxyamino acids, producing glycine and aldehydes, via a retro-aldol mechanism. This is Serine hydroxymethyltransferase from Aliivibrio salmonicida (strain LFI1238) (Vibrio salmonicida (strain LFI1238)).